A 62-amino-acid polypeptide reads, in one-letter code: Large ribosomal subunit protein bL28 (62 aa).

It belongs to the bacterial ribosomal protein bL28 family.

The polypeptide is Large ribosomal subunit protein bL28 (Helicobacter pylori (strain Shi470)).